Consider the following 474-residue polypeptide: ATP synthase subunit beta 1 (474 aa).

157–164 (GGAGVGKT) serves as a coordination point for ATP.

It belongs to the ATPase alpha/beta chains family. As to quaternary structure, F-type ATPases have 2 components, CF(1) - the catalytic core - and CF(0) - the membrane proton channel. CF(1) has five subunits: alpha(3), beta(3), gamma(1), delta(1), epsilon(1). CF(0) has three main subunits: a(1), b(2) and c(9-12). The alpha and beta chains form an alternating ring which encloses part of the gamma chain. CF(1) is attached to CF(0) by a central stalk formed by the gamma and epsilon chains, while a peripheral stalk is formed by the delta and b chains.

It is found in the cell inner membrane. The catalysed reaction is ATP + H2O + 4 H(+)(in) = ADP + phosphate + 5 H(+)(out). In terms of biological role, produces ATP from ADP in the presence of a proton gradient across the membrane. The catalytic sites are hosted primarily by the beta subunits. The chain is ATP synthase subunit beta 1 from Polaromonas naphthalenivorans (strain CJ2).